The sequence spans 220 residues: Guanylate kinase (220 aa).

Residues 16 to 195 (GLMFVLSSPS…AFESVRSILR (180 aa)) form the Guanylate kinase-like domain. Residue 23–30 (SPSGAGKT) participates in ATP binding.

Belongs to the guanylate kinase family.

The protein localises to the cytoplasm. The enzyme catalyses GMP + ATP = GDP + ADP. Functionally, essential for recycling GMP and indirectly, cGMP. The chain is Guanylate kinase from Rhodopseudomonas palustris (strain ATCC BAA-98 / CGA009).